Here is a 236-residue protein sequence, read N- to C-terminus: Phosphoribosylaminoimidazole-succinocarboxamide synthase (236 aa).

Belongs to the SAICAR synthetase family.

The enzyme catalyses 5-amino-1-(5-phospho-D-ribosyl)imidazole-4-carboxylate + L-aspartate + ATP = (2S)-2-[5-amino-1-(5-phospho-beta-D-ribosyl)imidazole-4-carboxamido]succinate + ADP + phosphate + 2 H(+). Its pathway is purine metabolism; IMP biosynthesis via de novo pathway; 5-amino-1-(5-phospho-D-ribosyl)imidazole-4-carboxamide from 5-amino-1-(5-phospho-D-ribosyl)imidazole-4-carboxylate: step 1/2. The chain is Phosphoribosylaminoimidazole-succinocarboxamide synthase from Pseudomonas syringae pv. syringae (strain B728a).